The following is a 299-amino-acid chain: Bifunctional protein FolD (299 aa).

Residues 168 to 170, serine 193, and isoleucine 234 contribute to the NADP(+) site; that span reads GRS.

It belongs to the tetrahydrofolate dehydrogenase/cyclohydrolase family. In terms of assembly, homodimer.

The catalysed reaction is (6R)-5,10-methylene-5,6,7,8-tetrahydrofolate + NADP(+) = (6R)-5,10-methenyltetrahydrofolate + NADPH. The enzyme catalyses (6R)-5,10-methenyltetrahydrofolate + H2O = (6R)-10-formyltetrahydrofolate + H(+). Its pathway is one-carbon metabolism; tetrahydrofolate interconversion. Catalyzes the oxidation of 5,10-methylenetetrahydrofolate to 5,10-methenyltetrahydrofolate and then the hydrolysis of 5,10-methenyltetrahydrofolate to 10-formyltetrahydrofolate. This Brucella abortus (strain S19) protein is Bifunctional protein FolD.